Consider the following 221-residue polypeptide: Adenylate kinase (221 aa).

An ATP-binding site is contributed by 10-15 (GAGKGT). The NMP stretch occupies residues 30 to 59 (STGDMLRAAVKAGTPLGLEAKRFMDAGELV). AMP is bound by residues Thr31, Arg36, 57–59 (ELV), 85–88 (GFPR), and Gln92. Residues 122–159 (GRRSHAASGRTYHVKFNPPKVEGLDDVTGEPLIQRDDD) form an LID region. Residues Arg123 and 132–133 (TY) contribute to the ATP site. Arg156 and Arg167 together coordinate AMP. Gly207 lines the ATP pocket.

This sequence belongs to the adenylate kinase family. Monomer.

Its subcellular location is the cytoplasm. It carries out the reaction AMP + ATP = 2 ADP. It functions in the pathway purine metabolism; AMP biosynthesis via salvage pathway; AMP from ADP: step 1/1. Its function is as follows. Catalyzes the reversible transfer of the terminal phosphate group between ATP and AMP. Plays an important role in cellular energy homeostasis and in adenine nucleotide metabolism. This chain is Adenylate kinase, found in Paraburkholderia xenovorans (strain LB400).